Here is a 205-residue protein sequence, read N- to C-terminus: Small ribosomal subunit protein uS4 (205 aa).

Residues 1–46 (MSKRASSKYKIDRRMGENIWGRPKSPVNRREYGPGQHGQRRKGKLS) form a disordered region. The S4 RNA-binding domain occupies 94–154 (SRLDAIVYRA…QKSKQLAIVL (61 aa)).

It belongs to the universal ribosomal protein uS4 family. In terms of assembly, part of the 30S ribosomal subunit. Contacts protein S5. The interaction surface between S4 and S5 is involved in control of translational fidelity.

One of the primary rRNA binding proteins, it binds directly to 16S rRNA where it nucleates assembly of the body of the 30S subunit. Its function is as follows. With S5 and S12 plays an important role in translational accuracy. The protein is Small ribosomal subunit protein uS4 of Allorhizobium ampelinum (strain ATCC BAA-846 / DSM 112012 / S4) (Agrobacterium vitis (strain S4)).